The sequence spans 949 residues: MARHETSFPEILDVAALRARCDFIASAHAEQREPMRRALLAAFKEANVAGRAKARELLAADGAGIKCAERISWLQDQLITLLHDFVLNQVFDAAKAPEASRIAVTAVGGYGRGTLAPGSDIDLLFLLPAKKAVWAEPAIEFMLYILWDLGFKVGHATRTIEECIRLSRADMTIRTAILECRYVCGSAALANELETRFDHEIVRNTGPEFIAAKLAERDERHRKAGDTRYLVEPNVKEGKGGLRDLHTLFWISKYFYRVKDSADLVKLGVLSKQEYKLFQKAEDFLWAVRCHMHFLTGKAEERLSFDIQREIAEALGYHDHPGLSAVERFMKHYFLVAKDVGDLTRIFCSALEDQQAKDTPGITGVISRFRNRVRKIAGTLDFVDDGGRIALAGTDVFKRDPVNLMRLFHIADINGLEFHPAALKQVTRSLGLITPHLRENEEANRLFLSILTSRRNPELILRRMNEAGVLGRFIPEFGKIVSMMQFNMYHHYTVDEHLLRSVDVLSRIERGLEEEAHPLTAMLMPGIEDREALYVAVLLHDIAKGRPEDHSVAGAKVARKLCPRFRLTPKQTEMVVWLVEEHLTMSMVAQTRDLNDRKTIVDFAERVQSLERLKMLLILTVCDIRAVGPGVWNGWKGQLLRTLYYETELLLSGGFSELSRKERAKHAAHMLEEALADWPKKERQAYVRLHYQPYLLTVALEEQVRHAGFIREADRAGRTLATMVRTHDFHAITEITVLSPDHPRLLTVIAGACAAAGANIVGAQIHTTSDGRALDTILVNREFSVAEDETRRAASIGKLIEDVLSGRKRLPEVIASRTRVKKRSRAFTVTPEVTISNTLSNKFTVIEVEGLDRTGLLSEVTAVLSDLSLDIASAHITTFGEKVIDTFYVTDLVGSKITSENRQMNIAARLKAVLAGEVDEARERMPSGIIAPTPVSRVPHGSKTTKAET.

The segment at 1 to 377 is uridylyltransferase; it reads MARHETSFPE…RFRNRVRKIA (377 aa). A uridylyl-removing region spans residues 378 to 733; it reads GTLDFVDDGG…VRTHDFHAIT (356 aa). In terms of domain architecture, HD spans 494–610; the sequence is VDEHLLRSVD…VDFAERVQSL (117 aa). 2 ACT domains span residues 734–816 and 845–926; these read EITV…VIAS and VIEV…ERMP. Residues 926–949 are disordered; that stretch reads PSGIIAPTPVSRVPHGSKTTKAET.

It belongs to the GlnD family. The cofactor is Mg(2+).

It carries out the reaction [protein-PII]-L-tyrosine + UTP = [protein-PII]-uridylyl-L-tyrosine + diphosphate. The enzyme catalyses [protein-PII]-uridylyl-L-tyrosine + H2O = [protein-PII]-L-tyrosine + UMP + H(+). Uridylyltransferase (UTase) activity is inhibited by glutamine, while glutamine activates uridylyl-removing (UR) activity. Its function is as follows. Modifies, by uridylylation and deuridylylation, the PII regulatory proteins (GlnB and homologs), in response to the nitrogen status of the cell that GlnD senses through the glutamine level. Under low glutamine levels, catalyzes the conversion of the PII proteins and UTP to PII-UMP and PPi, while under higher glutamine levels, GlnD hydrolyzes PII-UMP to PII and UMP (deuridylylation). Thus, controls uridylylation state and activity of the PII proteins, and plays an important role in the regulation of nitrogen fixation and metabolism. The sequence is that of Bifunctional uridylyltransferase/uridylyl-removing enzyme from Rhizobium meliloti (strain 1021) (Ensifer meliloti).